The following is a 319-amino-acid chain: Acetyl-coenzyme A carboxylase carboxyl transferase subunit alpha (319 aa).

One can recognise a CoA carboxyltransferase C-terminal domain in the interval 35 to 296 (NIDEEVHRLR…KAQLLADLAD (262 aa)).

Belongs to the AccA family. Acetyl-CoA carboxylase is a heterohexamer composed of biotin carboxyl carrier protein (AccB), biotin carboxylase (AccC) and two subunits each of ACCase subunit alpha (AccA) and ACCase subunit beta (AccD).

The protein resides in the cytoplasm. It catalyses the reaction N(6)-carboxybiotinyl-L-lysyl-[protein] + acetyl-CoA = N(6)-biotinyl-L-lysyl-[protein] + malonyl-CoA. It participates in lipid metabolism; malonyl-CoA biosynthesis; malonyl-CoA from acetyl-CoA: step 1/1. Functionally, component of the acetyl coenzyme A carboxylase (ACC) complex. First, biotin carboxylase catalyzes the carboxylation of biotin on its carrier protein (BCCP) and then the CO(2) group is transferred by the carboxyltransferase to acetyl-CoA to form malonyl-CoA. In Klebsiella pneumoniae (strain 342), this protein is Acetyl-coenzyme A carboxylase carboxyl transferase subunit alpha.